The following is a 284-amino-acid chain: Nucleotide-binding protein Pput_0988 (284 aa).

Residue 8-15 (GRSGSGKS) coordinates ATP. 60-63 (DARN) contacts GTP.

It belongs to the RapZ-like family.

Functionally, displays ATPase and GTPase activities. The sequence is that of Nucleotide-binding protein Pput_0988 from Pseudomonas putida (strain ATCC 700007 / DSM 6899 / JCM 31910 / BCRC 17059 / LMG 24140 / F1).